A 442-amino-acid polypeptide reads, in one-letter code: MGLAMEHGGSYARAGGSSRGCWYYLRYFFLFVSLIQFLIILGLVLFMVYGNVHVSTESNLQATERRAEGLYSQLLGLTASQSNLTKELNFTTRAKDAIMQMWLNARRDLDRINASFRQCQGDRVIYTNNQRYMAAIILSEKQCRDQFKDMNKSCDALLFMLNQKVKTLEVEIAKEKTICTKDKESVLLNKRVAEEQLVECVKTRELQHQERQLAKEQLQKVQALCLPLDKDKFEMDLRNLWRDSIIPRSLDNLGYNLYHPLGSELASIRRACDHMPSLMSSKVEELARSLRADIERVARENSDLQRQKLEAQQGLRASQEAKQKVEKEAQAREAKLQAECSRQTQLALEEKAVLRKERDNLAKELEEKKREAEQLRMELAIRNSALDTCIKTKSQPMMPVSRPMGPVPNPQPIDPASLEEFKRKILESQRPPAGIPVAPSSG.

Residues 1–27 (MGLAMEHGGSYARAGGSSRGCWYYLRY) are Cytoplasmic-facing. Residues 28-48 (FFLFVSLIQFLIILGLVLFMV) form a helical; Signal-anchor for type II membrane protein membrane-spanning segment. Topologically, residues 49–442 (YGNVHVSTES…AGIPVAPSSG (394 aa)) are extracellular. The stretch at 57–77 (ESNLQATERRAEGLYSQLLGL) forms a coiled coil. Asn83, Asn89, Asn113, and Asn151 each carry an N-linked (GlcNAc...) asparagine glycan. Coiled coils occupy residues 202–225 (KTRE…QALC) and 280–387 (SSKV…SALD). Disordered regions lie at residues 301 to 328 (NSDL…VEKE) and 394 to 418 (SQPM…PASL). The segment covering 319-328 (QEAKQKVEKE) has biased composition (basic and acidic residues).

Homodimer. Expressed in lung, kidney, heart, aorta, placenta, muscle, pituitary gland, adrenals, mammary gland, bladder, lymph node, bone marrow, trachea, digestive tract, liver and tumor-associated endothelium.

Its subcellular location is the cell membrane. It is found in the membrane. The protein localises to the caveola. It localises to the cytoplasm. The protein resides in the perinuclear region. Its function is as follows. Endothelial cell-specific membrane protein involved in the formation of the diaphragms that bridge endothelial fenestrae. It is also required for the formation of stomata of caveolae and transendothelial channels. Functions in microvascular permeability, endothelial fenestrae contributing to the passage of water and solutes and regulating transcellular versus paracellular flow in different organs. Plays a specific role in embryonic development. In Homo sapiens (Human), this protein is Plasmalemma vesicle-associated protein (PLVAP).